The primary structure comprises 437 residues: tRNA-2-methylthio-N(6)-dimethylallyladenosine synthase (437 aa).

An MTTase N-terminal domain is found at 3 to 120 (RKLFIETHGC…LPEMIDAART (118 aa)). [4Fe-4S] cluster contacts are provided by cysteine 12, cysteine 49, cysteine 83, cysteine 157, cysteine 161, and cysteine 164. The 228-residue stretch at 143 to 370 (RVDGPSAYVS…QQRINQQGFE (228 aa)) folds into the Radical SAM core domain. Residues 373–437 (RRMVGTTQRI…PHSLRGSLLS (65 aa)) form the TRAM domain.

Belongs to the methylthiotransferase family. MiaB subfamily. In terms of assembly, monomer. Requires [4Fe-4S] cluster as cofactor.

It is found in the cytoplasm. The enzyme catalyses N(6)-dimethylallyladenosine(37) in tRNA + (sulfur carrier)-SH + AH2 + 2 S-adenosyl-L-methionine = 2-methylsulfanyl-N(6)-dimethylallyladenosine(37) in tRNA + (sulfur carrier)-H + 5'-deoxyadenosine + L-methionine + A + S-adenosyl-L-homocysteine + 2 H(+). In terms of biological role, catalyzes the methylthiolation of N6-(dimethylallyl)adenosine (i(6)A), leading to the formation of 2-methylthio-N6-(dimethylallyl)adenosine (ms(2)i(6)A) at position 37 in tRNAs that read codons beginning with uridine. This is tRNA-2-methylthio-N(6)-dimethylallyladenosine synthase from Stutzerimonas stutzeri (strain A1501) (Pseudomonas stutzeri).